The chain runs to 131 residues: Lymphocyte antigen 6C2 (131 aa).

The N-terminal stretch at 1–26 (MDSTHATKSCLLILLVALLCAGRAQG) is a signal peptide. A UPAR/Ly6 domain is found at 27-116 (LQCYECYGVP…TAGSTWTMAG (90 aa)). Intrachain disulfides connect Cys-29/Cys-53, Cys-32/Cys-41, Cys-46/Cys-74, Cys-78/Cys-95, and Cys-96/Cys-101. The GPI-anchor amidated glycine moiety is linked to residue Gly-109. Positions 110-131 (STWTMAGVLLFSLSSVILQTLL) are cleaved as a propeptide — removed in mature form.

It localises to the cell membrane. The sequence is that of Lymphocyte antigen 6C2 (Ly6c2) from Mus musculus (Mouse).